Reading from the N-terminus, the 460-residue chain is Squalene synthase (460 aa).

A helical transmembrane segment spans residues 425 to 445; it reads ISILFVFFIILVCLAVIFYVF.

This sequence belongs to the phytoene/squalene synthase family. In terms of assembly, interacts with pof14. Requires Mg(2+) as cofactor.

Its subcellular location is the endoplasmic reticulum membrane. The enzyme catalyses 2 (2E,6E)-farnesyl diphosphate + NADPH + H(+) = squalene + 2 diphosphate + NADP(+). The catalysed reaction is 2 (2E,6E)-farnesyl diphosphate + NADH + H(+) = squalene + 2 diphosphate + NAD(+). It functions in the pathway terpene metabolism; lanosterol biosynthesis; lanosterol from farnesyl diphosphate: step 1/3. It participates in steroid metabolism; ergosterol biosynthesis. In terms of biological role, squalene synthase; part of the third module of ergosterol biosynthesis pathway that includes by the late steps of the pathway. Erg9 produces squalene from 2 farnesyl pyrophosphate moieties. The third module or late pathway involves the ergosterol synthesis itself through consecutive reactions that mainly occur in the endoplasmic reticulum (ER) membrane. Firstly, the squalene synthase erg9 catalyzes the condensation of 2 farnesyl pyrophosphate moieties to form squalene, which is the precursor of all steroids. Secondly, squalene is converted into lanosterol by the consecutive action of the squalene epoxidase erg1 and the lanosterol synthase erg7. The lanosterol 14-alpha-demethylase erg11/cyp1 catalyzes C14-demethylation of lanosterol to produce 4,4'-dimethyl cholesta-8,14,24-triene-3-beta-ol. In the next steps, a complex process involving various demethylation, reduction and desaturation reactions catalyzed by the C-14 reductase erg24 and the C-4 demethylation complex erg25-erg26-erg27 leads to the production of zymosterol. Erg28 likely functions in the C-4 demethylation complex reaction by tethering erg26 and Erg27 to the endoplasmic reticulum or to facilitate interaction between these proteins. Then, the sterol 24-C-methyltransferase erg6 catalyzes the methyl transfer from S-adenosyl-methionine to the C-24 of zymosterol to form fecosterol. The C-8 sterol isomerase erg2 catalyzes the reaction which results in unsaturation at C-7 in the B ring of sterols and thus converts fecosterol to episterol. The sterol-C5-desaturases erg31 and erg32 then catalyze the introduction of a C-5 double bond in the B ring to produce 5-dehydroepisterol. The C-22 sterol desaturase erg5 further converts 5-dehydroepisterol into ergosta-5,7,22,24(28)-tetraen-3beta-ol by forming the C-22(23) double bond in the sterol side chain. Finally, ergosta-5,7,22,24(28)-tetraen-3beta-ol is substrate of the C-24(28) sterol reductase erg4 to produce ergosterol. In the genus Schizosaccharomyces, a second route exists between lanosterol and fecosterol, via the methylation of lanosterol to eburicol by erg6, followed by C14-demethylation by erg11/cyp1 and C4-demethylation by the demethylation complex erg25-erg26-erg27. This chain is Squalene synthase, found in Schizosaccharomyces pombe (strain 972 / ATCC 24843) (Fission yeast).